Consider the following 143-residue polypeptide: Interleukin-3 (143 aa).

The first 19 residues, 1 to 19 (MSRLPVLLLLHLLVSPGLQ), serve as a signal peptide directing secretion. A disulfide bridge links cysteine 35 with cysteine 103. A glycan (N-linked (GlcNAc...) asparagine) is linked at asparagine 89.

This sequence belongs to the IL-3 family. As to quaternary structure, monomer. As to expression, activated T-cells, mast cells, natural killer cells.

The protein localises to the secreted. In terms of biological role, granulocyte/macrophage colony-stimulating factors are cytokines that act in hematopoiesis by controlling the production, differentiation, and function of 2 related white cell populations of the blood, the granulocytes and the monocytes-macrophages. Functionally, this CSF induces granulocytes, macrophages, mast cells, stem cells, erythroid cells, eosinophils and megakaryocytes. In Macaca mulatta (Rhesus macaque), this protein is Interleukin-3 (IL3).